A 404-amino-acid chain; its full sequence is Multidrug resistance protein MdtG (404 aa).

Helical transmembrane passes span 19 to 39 (LGCF…PLYV), 56 to 76 (LVFS…GGLA), 90 to 110 (LGMA…QFLI), 113 to 133 (ALLG…ATQV), 144 to 164 (TLST…GLLA), 171 to 191 (PVFF…FFFI), 222 to 242 (LFVT…ILTL), 254 to 274 (IAFI…LSAP), 288 to 308 (ILIV…FVQT), 317 to 337 (FLLG…LVYN), and 376 to 396 (AVFC…WNSL).

It belongs to the major facilitator superfamily. DHA1 family. MdtG (TC 2.A.1.2.20) subfamily.

Its subcellular location is the cell inner membrane. In Salmonella choleraesuis (strain SC-B67), this protein is Multidrug resistance protein MdtG.